The primary structure comprises 512 residues: Serine/threonine-protein kinase BSK1 (512 aa).

Gly2 carries the N-myristoyl glycine lipid modification. Residues 8-48 are disordered; the sequence is FSGDNPLGKDGVQPQPLSQNNHGGATTADNGGSGGASGVGG. Over residues 38–48 the composition is skewed to gly residues; the sequence is GGSGGASGVGG. The Protein kinase domain occupies 76–331; the sequence is DNIVSESGEK…DLVATLAPLQ (256 aa). ATP is bound by residues 82 to 90 and Lys104; that span reads SGEKAPNLV. Asp198 acts as the Proton acceptor in catalysis. A Phosphoserine modification is found at Ser230. Residues 483 to 508 are a coiled coil; it reads AKLNMNTDAADMLNEAAQLEEKRQRG.

Belongs to the protein kinase superfamily. Ser/Thr protein kinase family. In terms of assembly, interacts with BRI1. Interacts with ASK7/BIN2, BSK5, BSK6, BSK8 and BSK11. Interacts with FLS2. Post-translationally, phosphorylated at Ser-230 by BRI1 upon brassinolide (BL) treatment. Phosphorylation at Ser-230 weakens the interaction between BSK1 and BRI1. Phosphorylated by ASK7/BIN2 and ASK9/BIL2.

It is found in the cell membrane. The catalysed reaction is L-seryl-[protein] + ATP = O-phospho-L-seryl-[protein] + ADP + H(+). It carries out the reaction L-threonyl-[protein] + ATP = O-phospho-L-threonyl-[protein] + ADP + H(+). In terms of biological role, serine/threonine kinase that acts as a positive regulator of brassinosteroid (BR) signaling downstream of the receptor kinase BRI1. Mediates signal transduction from BRI1 by functioning as substrate of BRI1. Functions as a positive regulator of plant immunity. May be involved in the regulation of pattern-triggered immunity (PTI) downstream of the flagellin receptor FLS2. Possesses kinase activity in vitro. Kinase activity is required for its function in innate immunity. This chain is Serine/threonine-protein kinase BSK1, found in Arabidopsis thaliana (Mouse-ear cress).